The chain runs to 262 residues: Spindlin-1 (262 aa).

Residues 1–51 form a disordered region; that stretch reads MKTPFGKTPGQRSRADAGHAGVSANMMKKRTSHKKHRSSVGPSKPVSQPRR. Residues lysine 7 and lysine 28 each participate in a glycyl lysine isopeptide (Lys-Gly) (interchain with G-Cter in SUMO2) cross-link. Over residues 27-38 the composition is skewed to basic residues; it reads MKKRTSHKKHRS. At lysine 44 the chain carries N6-acetyllysine; alternate. Residue lysine 44 forms a Glycyl lysine isopeptide (Lys-Gly) (interchain with G-Cter in SUMO2); alternate linkage. The segment at 53 to 116 is tudor-like domain 1; that stretch reads IVGCRIQHGW…RVSALEVLPD (64 aa). Positions 93-98 are histone H3K4me3 and H3R8me2a binding; it reads GFDCVY. A phosphoserine; by AURKA mark is found at serine 109 and serine 124. The interval 132–193 is tudor-like domain 2; the sequence is MIGKAVEHMF…DYKEGDLRIM (62 aa). A region of interest (histone H3K4me3 and H3R8me2a binding) is located at residue glutamate 142. The residue at position 199 (serine 199) is a Phosphoserine. Positions 213 to 262 are tudor-like domain 3; the sequence is LVGKQVEYAKEDGSKRTGMVIHQVEAKPSVYFIKFDDDFHIYVYDLVKTS. The interval 250 to 252 is histone H3K4me3 and H3R8me2a binding; that stretch reads DFH.

This sequence belongs to the SPIN/STSY family. As to quaternary structure, homodimer; may form higher-order oligomers. Interacts with TCF7L2/TCF4; the interaction is direct. Interacts with HABP4 and SERBP1. Interacts with SPINDOC; SPINDOC stabilizes SPIN1 and enhances its association with bivalent H3K4me3K9me3 mark. Interacts with SPOCD1; promoting recruitment of PIWIL4 and SPOCD1 to transposons. Post-translationally, phosphorylated during oocyte meiotic maturation. In terms of tissue distribution, highly expressed in ovarian cancer tissues.

The protein resides in the nucleus. It is found in the nucleolus. Functionally, chromatin reader that specifically recognizes and binds histone H3 both trimethylated at 'Lys-4' and 'Lys-9' (H3K4me3K9me3) and is involved in piRNA-mediated retrotransposon silencing during spermatogenesis. Plays a key role in the initiation of the PIWIL4-piRNA pathway, a pathway that directs transposon DNA methylation and silencing in the male embryonic germ cells, by promoting recruitment of DNA methylation machinery to transposons: binds young, but not old, LINE1 transposons, which are specifically marked with H3K4me3K9me3, and promotes the recruitment of PIWIL4 and SPOCD1 to transposons, leading to piRNA-directed DNA methylation. Also recognizes and binds histone H3 both trimethylated at 'Lys-4' and asymmetrically dimethylated at 'Arg-8' (H3K4me3 and H3R8me2a) and acts as an activator of Wnt signaling pathway downstream of PRMT2. In case of cancer, promotes cell cancer proliferation via activation of the Wnt signaling pathway. Overexpression induces metaphase arrest and chromosomal instability. Localizes to active rDNA loci and promotes the expression of rRNA genes. May play a role in cell-cycle regulation during the transition from gamete to embryo. Involved in oocyte meiotic resumption, a process that takes place before ovulation to resume meiosis of oocytes blocked in prophase I: may act by regulating maternal transcripts to control meiotic resumption. The sequence is that of Spindlin-1 from Homo sapiens (Human).